We begin with the raw amino-acid sequence, 93 residues long: ATP-dependent Clp protease adapter protein ClpS (93 aa).

This sequence belongs to the ClpS family. As to quaternary structure, binds to the N-terminal domain of the chaperone ClpA.

Involved in the modulation of the specificity of the ClpAP-mediated ATP-dependent protein degradation. This is ATP-dependent Clp protease adapter protein ClpS from Gloeobacter violaceus (strain ATCC 29082 / PCC 7421).